The sequence spans 698 residues: Trafficking protein particle complex III-specific subunit 85 (698 aa).

2 disordered regions span residues 82-125 (VGQH…LFQR) and 678-698 (VDSAPRPSEKNLTRTSVSFIG). Over residues 678–689 (VDSAPRPSEKNL) the composition is skewed to basic and acidic residues.

The protein belongs to the TRS85 family. In terms of assembly, part of the multisubunit TRAPP (transport protein particle) III complex composed of BET3, BET5, TRS20, TRS23, TRS31, TRS33 and TRS85.

It is found in the preautophagosomal structure. Specific subunit of the TRAPP III complex that acts as an autophagy-specific guanine nucleotide exchange factor (GEF) for YPT1. TRS85 directs the TRAPP III complex to the phagophore assembly site (PAS) that is involved in autophagosome formation. Required for membrane expansion during autophagy and the CVT pathway. Required for sporulation. Has a role late in meiosis following DNA replication. The polypeptide is Trafficking protein particle complex III-specific subunit 85 (TRS85) (Saccharomyces cerevisiae (strain ATCC 204508 / S288c) (Baker's yeast)).